Consider the following 406-residue polypeptide: Glutamyl-tRNA(Gln) amidotransferase subunit D (406 aa).

Residues Lys-68–Asn-390 enclose the Asparaginase/glutaminase domain. Active-site residues include Thr-78, Thr-152, Asp-153, and Lys-230.

The protein belongs to the asparaginase 1 family. GatD subfamily. As to quaternary structure, heterodimer of GatD and GatE.

The catalysed reaction is L-glutamyl-tRNA(Gln) + L-glutamine + ATP + H2O = L-glutaminyl-tRNA(Gln) + L-glutamate + ADP + phosphate + H(+). Its function is as follows. Allows the formation of correctly charged Gln-tRNA(Gln) through the transamidation of misacylated Glu-tRNA(Gln) in organisms which lack glutaminyl-tRNA synthetase. The reaction takes place in the presence of glutamine and ATP through an activated gamma-phospho-Glu-tRNA(Gln). The GatDE system is specific for glutamate and does not act on aspartate. The polypeptide is Glutamyl-tRNA(Gln) amidotransferase subunit D (Thermoplasma volcanium (strain ATCC 51530 / DSM 4299 / JCM 9571 / NBRC 15438 / GSS1)).